The primary structure comprises 691 residues: F-box/LRR-repeat protein 5 (691 aa).

The segment at 1 to 159 is hemerythrin-like; sequence MAPFPEEVDV…IKKKVIAQHC (159 aa). 7 residues coordinate Fe(3+): histidine 15, histidine 57, glutamate 58, glutamate 61, histidine 80, histidine 126, and glutamate 130. Positions 202–248 constitute an F-box domain; the sequence is STGITHLPPEVMVSIFSYLNPQELCRCSQVSTKWSQLAKTGSLWKHL. LRR repeat units follow at residues 340–364, 365–392, 393–418, 479–508, 576–607, 608–635, and 636–661; these read SSAVSSKMVRQILELCPNLEHLDLT, QTDISDSAFDSWSWLGCCQSLRHLDLSG, CEKITDVALEKISRALGILTTHESGL, VWMLDAEDLADIEDAVEWRHRNVESLCVME, TRLLREKDLIYSGSEKSDQETGRVLLFLSLSG, CYQITDHGLRVLTLGGGLPYLEHLNLSG, and CLTVTGAGLQDLVSACPSLNDEYFYY. 4 residues coordinate [2Fe-2S] cluster: cysteine 662, cysteine 676, cysteine 686, and cysteine 687.

In terms of assembly, part of a SCF (SKP1-cullin-F-box) protein ligase complex. Interacts with ACO1/IRP1, IREB2/IRP2; the interaction depends on the [2Fe-2S] cluster. Interacts with DCTN1/p150-glued. The cofactor is [2Fe-2S] cluster. In terms of processing, polybiquitinated upon iron and oxygen depletion, leading to its degradation by the proteasome. Ubiquitination is regulated by the hemerythrin-like region that acts as an oxygen and iron sensor. Undergoes constitutive ubiquitin-dependent degradation at the steady state by HERC2.

It localises to the cytoplasm. Its subcellular location is the perinuclear region. It is found in the nucleus. It functions in the pathway protein modification; protein ubiquitination. With respect to regulation, an iron-sulfur cluster promotes IRP2 polyubiquitination and degradation in response to both iron and oxygen concentrations. Component of some SCF (SKP1-cullin-F-box) protein ligase complex that plays a central role in iron homeostasis by promoting the ubiquitination and subsequent degradation of IREB2/IRP2. The C-terminal domain of FBXL5 contains a redox-sensitive [2Fe-2S] cluster that, upon oxidation, promotes binding to IRP2 to effect its oxygen-dependent degradation. Under iron deficiency conditions, the N-terminal hemerythrin-like (Hr) region, which contains a diiron metal center, cannot bind iron and undergoes conformational changes that destabilize the FBXL5 protein and cause its ubiquitination and degradation. When intracellular iron levels start rising, the Hr region is stabilized. Additional increases in iron levels facilitate the assembly and incorporation of a redox active [2Fe-2S] cluster in the C-terminal domain. Only when oxygen level is high enough to maintain the cluster in its oxidized state can FBXL5 recruit IRP2 as a substrate for polyubiquination and degradation. Promotes ubiquitination and subsequent degradation of the dynactin complex component DCTN1. Within the nucleus, promotes the ubiquitination of SNAI1; preventing its interaction with DNA and promoting its degradation. Negatively regulates DNA damage response by mediating the ubiquitin-proteasome degradation of the DNA repair protein NABP2. This Bos taurus (Bovine) protein is F-box/LRR-repeat protein 5 (FBXL5).